Reading from the N-terminus, the 479-residue chain is Lactaldehyde dehydrogenase (479 aa).

Leu-150 provides a ligand contact to NAD(+). Arg-161 is a (S)-lactate binding site. Residues 176–179 (KPSE), Gln-214, and Ser-230 contribute to the NAD(+) site. Position 251 (Glu-251) interacts with (S)-lactate. Active-site residues include Glu-251 and Cys-285. Asn-286 contacts (S)-lactate. An NAD(+)-binding site is contributed by Arg-336. (S)-lactate-binding residues include Glu-443 and His-449.

This sequence belongs to the aldehyde dehydrogenase family. Homotetramer.

The catalysed reaction is (S)-lactaldehyde + NAD(+) + H2O = (S)-lactate + NADH + 2 H(+). It catalyses the reaction glycolaldehyde + NAD(+) + H2O = glycolate + NADH + 2 H(+). The protein operates within carbohydrate degradation; L-fucose degradation. It functions in the pathway carbohydrate degradation; L-rhamnose degradation. Substrate inhibition is very strong with lactaldehyde, diminishing progressively with glycolaldehyde, glyceraldehyde or methylglyoxal. Inhibited by p-hydroxy mercuribenzoate and by some cations, including Mn(2+), Ca(2+), Cu(2+) and Zn(2+). Inhibited by NADH. Its function is as follows. Catalyzes the irreversible oxidation of L-lactaldehyde to L-lactate. Also shows high activity with glycolaldehyde and L-glyceraldehyde. Has weaker activity with various aldehydes such as methylglyoxal, propionaldehyde or benzaldehyde. Involved in the degradation of lactaldehyde produced during metabolism of L-fucose and L-rhamnose. It may be involved in several other metabolic pathways. The chain is Lactaldehyde dehydrogenase (aldA) from Escherichia coli (strain K12).